Reading from the N-terminus, the 764-residue chain is Thyrotropin receptor (764 aa).

An N-terminal signal peptide occupies residues 1-21 (MSLTPLLQLALLLALPRSLRG). The Extracellular portion of the chain corresponds to 22–413 (KGCPSPPCEC…EFNPCEDIMG (392 aa)). Cys31 and Cys41 are disulfide-bonded. 2 N-linked (GlcNAc...) asparagine glycosylation sites follow: Asn77 and Asn99. LRR repeat units lie at residues 125-150 (LPLL…VYST), 151-174 (DVFF…AFQG), 176-199 (CNET…AFNG), 201-223 (KLDA…AFGG), 225-248 (FSGP…GLEH), and 250-271 (KELI…SFLH). 2 N-linked (GlcNAc...) asparagine glycosylation sites follow: Asn177 and Asn198. N-linked (GlcNAc...) asparagine glycosylation is present at Asn302. At Tyr385 the chain carries Sulfotyrosine. The chain crosses the membrane as a helical span at residues 414 to 441 (YRFLRIVVWFVSLLALLGNVFVLVILLT). Over 442-450 (SHYKLTVPR) the chain is Cytoplasmic. The helical transmembrane segment at 451-473 (FLMCNLAFADFCMGMYLLLIASV) threads the bilayer. Residues 474 to 494 (DLYTQSEYYNHAIDWQTGPGC) are Extracellular-facing. Residues Cys494 and Cys569 are joined by a disulfide bond. The helical transmembrane segment at 495 to 517 (NTAGFFTVFASELSVYTLTVITL) threads the bilayer. Topologically, residues 518–537 (ERWYAITFAMRLDRKIRLRH) are cytoplasmic. A helical membrane pass occupies residues 538-560 (AYAIMAGGWVCCFLLALLPLVGI). Residues 561 to 580 (SSYAKVSICLPMDTETPLAL) are Extracellular-facing. Residues 581–602 (AYIILVLLLNIVAFTIVCSCYV) form a helical membrane-spanning segment. Over 603–625 (KIYITVRNPQYNPGDKDTKIAKR) the chain is Cytoplasmic. The helical transmembrane segment at 626–649 (MAVLIFTDFMCMAPISFYALSALM) threads the bilayer. Topologically, residues 650–660 (NKPLITVTNSK) are extracellular. Residues 661–682 (ILLVLFYPLNSCANPFLYAIFT) form a helical membrane-spanning segment. Over 683–764 (KAFQRDVFIL…ISKEYKQPVL (82 aa)) the chain is Cytoplasmic. The PDZ-binding signature appears at 762-764 (PVL).

Belongs to the G-protein coupled receptor 1 family. FSH/LSH/TSH subfamily. In terms of assembly, interacts with heterodimer GPHA2:GPHB5; this interaction stimulates cAMP production. Interacts (via the PDZ-binding motif) with SCRIB; regulates TSHR trafficking and function. Glycosylated. Post-translationally, sulfated. Sulfation on Tyr-385 plays a role in thyrotropin receptor binding and activation. Expressed in thyroide cells (at protein level).

It localises to the cell membrane. It is found in the basolateral cell membrane. In terms of biological role, receptor for the thyroid-stimulating hormone (TSH) or thyrotropin. Also acts as a receptor for the heterodimeric glycoprotein hormone (GPHA2:GPHB5) or thyrostimulin. The activity of this receptor is mediated by G proteins which activate adenylate cyclase. Plays a central role in controlling thyroid cell metabolism. In Sus scrofa (Pig), this protein is Thyrotropin receptor (TSHR).